The sequence spans 147 residues: Ribosome-binding factor A (147 aa).

A disordered region spans residues 122-147 (QQQFGSVDDDVIENDIEESDDTEGKV). The span at 128–147 (VDDDVIENDIEESDDTEGKV) shows a compositional bias: acidic residues.

The protein belongs to the RbfA family. In terms of assembly, monomer. Binds 30S ribosomal subunits, but not 50S ribosomal subunits or 70S ribosomes.

It is found in the cytoplasm. Its function is as follows. One of several proteins that assist in the late maturation steps of the functional core of the 30S ribosomal subunit. Associates with free 30S ribosomal subunits (but not with 30S subunits that are part of 70S ribosomes or polysomes). Required for efficient processing of 16S rRNA. May interact with the 5'-terminal helix region of 16S rRNA. The sequence is that of Ribosome-binding factor A from Shewanella oneidensis (strain ATCC 700550 / JCM 31522 / CIP 106686 / LMG 19005 / NCIMB 14063 / MR-1).